Reading from the N-terminus, the 358-residue chain is 3-dehydroquinate synthase (358 aa).

Residues 72-77 (GGERVK), 106-110 (GALLD), 130-131 (ST), lysine 143, and lysine 151 contribute to the NAD(+) site. Zn(2+)-binding residues include glutamate 184, histidine 245, and histidine 261.

Belongs to the sugar phosphate cyclases superfamily. Dehydroquinate synthase family. NAD(+) is required as a cofactor. It depends on Co(2+) as a cofactor. Requires Zn(2+) as cofactor.

The protein resides in the cytoplasm. It carries out the reaction 7-phospho-2-dehydro-3-deoxy-D-arabino-heptonate = 3-dehydroquinate + phosphate. Its pathway is metabolic intermediate biosynthesis; chorismate biosynthesis; chorismate from D-erythrose 4-phosphate and phosphoenolpyruvate: step 2/7. Its function is as follows. Catalyzes the conversion of 3-deoxy-D-arabino-heptulosonate 7-phosphate (DAHP) to dehydroquinate (DHQ). This is 3-dehydroquinate synthase (aroB) from Aeropyrum pernix (strain ATCC 700893 / DSM 11879 / JCM 9820 / NBRC 100138 / K1).